A 204-amino-acid polypeptide reads, in one-letter code: Urease accessory protein UreG (204 aa).

12–19 (GPVGSGKT) contributes to the GTP binding site.

Belongs to the SIMIBI class G3E GTPase family. UreG subfamily. As to quaternary structure, homodimer. UreD, UreF and UreG form a complex that acts as a GTP-hydrolysis-dependent molecular chaperone, activating the urease apoprotein by helping to assemble the nickel containing metallocenter of UreC. The UreE protein probably delivers the nickel.

The protein localises to the cytoplasm. Facilitates the functional incorporation of the urease nickel metallocenter. This process requires GTP hydrolysis, probably effectuated by UreG. The chain is Urease accessory protein UreG from Streptococcus salivarius (strain 57.I).